A 1089-amino-acid polypeptide reads, in one-letter code: Pentatricopeptide repeat-containing protein MRL1, chloroplastic (1089 aa).

The transit peptide at 1–72 directs the protein to the chloroplast; that stretch reads MEVTSTTFIS…SIRSPRLVVR (72 aa). PPR repeat units lie at residues 466–500, 501–535, 536–570, 571–605, 608–642, 643–677, 678–712, 713–747, 748–782, and 783–817; these read TMST…GMTA, DCKL…GVEA, NLHT…NVKP, DRVV…THPI, DHIS…GIRG, TPEV…DVTP, DEVF…GIRL, GTIS…KLRP, TIST…GLKP, and NTIT…GVSP.

Belongs to the PPR family. P subfamily. In terms of tissue distribution, expressed in stems, leaves and sepals.

The protein localises to the plastid. The protein resides in the chloroplast. Regulator of the large subunit (LS) of RuBisCO. Involved either in the processing or in the stabilization of the processed transcript, probably by acting as a barrier to the 5'&gt;3' degradation. The chain is Pentatricopeptide repeat-containing protein MRL1, chloroplastic (MRL1) from Arabidopsis thaliana (Mouse-ear cress).